Consider the following 205-residue polypeptide: Ribosome maturation factor RimP (205 aa).

The segment covering 1–13 (MSNAEATTSSDRT) has biased composition (polar residues). The interval 1-27 (MSNAEATTSSDRTGTGKAEAESVHNPE) is disordered. A compositionally biased stretch (basic and acidic residues) spans 18–27 (AEAESVHNPE).

The protein belongs to the RimP family.

The protein localises to the cytoplasm. Its function is as follows. Required for maturation of 30S ribosomal subunits. The polypeptide is Ribosome maturation factor RimP (Arthrobacter sp. (strain FB24)).